The chain runs to 438 residues: Neutral metalloprotease ShpI (438 aa).

The N-terminal stretch at 1–26 (MINKKKLVTSLVTSSLLATFTLGSFA) is a signal peptide. A propeptide spanning residues 27–101 (DAHTYIINNE…KSENALSNSK (75 aa)) is cleaved from the precursor. His242 is a binding site for Zn(2+). Glu243 is an active-site residue. Residues His246 and Glu269 each coordinate Zn(2+).

The protein belongs to the peptidase M30 family. Requires Zn(2+) as cofactor. Post-translationally, several different N-terminal ends may be produced, the favored N-terminus is position 102.

It localises to the secreted. With respect to regulation, inhibited by metal- and zinc-specific inhibitors, such as EDTA and 1,10-phenanthroline in vitro. Is resistant to all inhibitors of serine, cysteine and aspartic proteases. Functionally, protease that has a low substrate specificity. Catalyzes the hydrolysis of glucagon, melittin and oxidized beta-insulin at various positions in vitro. Is not able to cleave elastin or the synthetic substrates FAGLA (a substrate for neutral proteinases) and FALGPA (a substrate for collagenase). The sequence is that of Neutral metalloprotease ShpI from Staphylococcus hyicus.